Reading from the N-terminus, the 513-residue chain is Histone acetyltransferase KAT5 (513 aa).

A Tudor-knot domain is found at 8–65 (IEGCRLPVLRRNQDNEDEWPLAEILSVKDISGRKLFYVHYIDFNKRLDEWVTHERLDL). Lys52 bears the N6-acetyllysine mark. The segment at 69-106 (QFPKKEAKTPTKNGLPGSRPGSPEREVPASAQASGKTL) is disordered. A Phosphoserine modification is found at Ser86. Ser90 carries the post-translational modification Phosphoserine; by CDK1 and CDK9. An N6-acetyllysine; by autocatalysis mark is found at Lys104 and Lys120. The disordered stretch occupies residues 122-217 (REAIPGGEPD…SAPRMTGSLV (96 aa)). Positions 133 to 144 (PLSSSSCLQPNH) are enriched in polar residues. N6-acetyllysine; by autocatalysis occurs at positions 148, 150, 187, and 189. Ser199 is subject to Phosphoserine. The region spanning 227–504 (TRMKNIECIE…IDSKCLHFTP (278 aa)) is the MYST-type HAT domain. The C2HC MYST-type zinc finger occupies 260–285 (LYLCEFCLKYGRSLKCLQRHLTKCDL). Residue Lys327 is modified to N6-acetyllysine; by autocatalysis. Positions 368 to 513 (ACILTLPPYQ…PKDWSKRGKW (146 aa)) are interaction with ATF2. Acetyl-CoA contacts are provided by residues 370 to 372 (ILT) and 377 to 383 (QRRGYGK). Glu403 functions as the Proton donor/acceptor in the catalytic mechanism. Acetyl-CoA is bound by residues Ser407 and Ser416. Lys430 is covalently cross-linked (Glycyl lysine isopeptide (Lys-Gly) (interchain with G-Cter in SUMO1); alternate). A Glycyl lysine isopeptide (Lys-Gly) (interchain with G-Cter in SUMO2); alternate cross-link involves residue Lys430. Residue Lys451 forms a Glycyl lysine isopeptide (Lys-Gly) (interchain with G-Cter in SUMO1) linkage.

Belongs to the MYST (SAS/MOZ) family. As to quaternary structure, component of the NuA4 histone acetyltransferase complex which contains the catalytic subunit KAT5/TIP60 and the subunits EP400, TRRAP/PAF400, BRD8/SMAP, EPC1, DMAP1/DNMAP1, RUVBL1/TIP49, RUVBL2, ING3, actin, ACTL6A/BAF53A, MORF4L1/MRG15, MORF4L2/MRGX, MRGBP, YEATS4/GAS41, VPS72/YL1 and MEAF6. KAT5/TIP60, EPC1, and ING3 together constitute a minimal HAT complex termed Piccolo NuA4. The NuA4 complex interacts with MYC. Interacts with ATM. Interacts with JADE1. Interacts with PLA2G4A/CPLA2, EDNRA and HDAC7. Interacts with the cytoplasmic tail of APP and APBB1/FE65. Interacts with TRIM24 and TRIM68. Forms a complex with SENP6 and UBE2I in response to UV irradiation. Identified in a complex with HINT1. Interacts with ATF2 and CUL3. Interacts with NR1D2 (via N-terminus). Component of a SWR1-like complex. Interacts with FOXP3. Interacts with ZBTB49. Interacts with SRF. Interacts with ATF3; promoting autoacetylation and deubiquitination by USP7. Interacts with EP300/p300; interaction promotes KAT5 autoacetylation. Interacts with PRKDC; interaction is impaired following KAT5 sumoylation. Interacts with GPR50. Interacts with NME3; this interaction enables recruitment of NME3 at DNA damage sites where it plays a role in the repair of DNA. Phosphorylated on Ser-86 and Ser-90; enhanced during G2/M phase. The phosphorylated form has a higher activity. Phosphorylation at Ser-90 by CDK1 or CDK9 is a prerequisite for phosphorylation at Ser-86 by GSK3. Phosphorylation at Ser-86 by GSK3 (GSK3A or GSK3B) activates acetyltransferase and acyltransferase activity. Phosphorylation at Ser-90 by CDK9 promotes KAT5 recruitment to chromatin. Phosphorylation by VRK1 following DNA damage promotes KAT5 association with chromatin and histone acetyltransferase activity. In terms of processing, autoacetylated. Autoacetylation is required for histone acetyltransferase activity. Autoacetylation at Lys-327 is facilitated by interaction with EP300/p300: it prevents ubiquitination and subsequent degradation by the proteasome and promotes acetylation of target proteins. Deacetylated by HDAC3 and SIRT1. Deacetylation by HDAC3 promotes its ubiquitination and cytoplasmic localization. Post-translationally, sumoylated by UBE2I at Lys-430 and Lys-451, leading to increase of its histone acetyltransferase activity in UV-induced DNA damage response, as well as its translocation to nuclear bodies. Sumoylation with SUMO2 by PIAS4 at Lys-430 promotes repair of DNA double-strand breaks (DSBs) via homologous recombination (HR). Sumoylation by PIAS4 impairs interaction with PRKDC, inhibiting non-homologous end joining (NHEJ)-mediated repair of DSBs, thereby facilitating HR. Desumoylated by SENP3. Ubiquitinated by MDM2, leading to its proteasome-dependent degradation. Ubiquitination is prevented by autoacetylation at Lys-327. Ubiquitinated following deacetylation by HDAC3, leading to cytoplasmic localization. Deubiquitinated by USP7 following interaction with ATF3, promoting its stabilization. As to expression, expressed in testis, heart, brain, kidney and liver. Weakly expressed in lung.

The protein localises to the nucleus. It is found in the chromosome. The protein resides in the cytoplasm. Its subcellular location is the centromere. It localises to the kinetochore. The protein localises to the cytoskeleton. It is found in the spindle pole. The protein resides in the nucleolus. Its subcellular location is the perinuclear region. It carries out the reaction L-lysyl-[histone] + acetyl-CoA = N(6)-acetyl-L-lysyl-[histone] + CoA + H(+). The catalysed reaction is L-lysyl-[protein] + acetyl-CoA = N(6)-acetyl-L-lysyl-[protein] + CoA + H(+). The enzyme catalyses (2E)-butenoyl-CoA + L-lysyl-[protein] = N(6)-(2E)-butenoyl-L-lysyl-[protein] + CoA + H(+). It catalyses the reaction 2-hydroxyisobutanoyl-CoA + L-lysyl-[protein] = N(6)-(2-hydroxyisobutanoyl)-L-lysyl-[protein] + CoA + H(+). It carries out the reaction (S)-lactoyl-CoA + L-lysyl-[protein] = N(6)-[(S)-lactoyl]-L-lysyl-[protein] + CoA + H(+). Acyltransferase and acetyltransferase activities are activated by phosphorylation and autoacetylation. Autoacetylation activates the histone acetyltransferase activity. Its function is as follows. Catalytic subunit of the NuA4 histone acetyltransferase complex, a multiprotein complex involved in transcriptional activation of select genes principally by acetylation of nucleosomal histones H2A and H4. Histone acetylation alters nucleosome-DNA interactions and promotes interaction of the modified histones with other proteins which positively regulate transcription. The NuA4 histone acetyltransferase complex is required for the activation of transcriptional programs associated with proto-oncogene mediated growth induction, tumor suppressor mediated growth arrest and replicative senescence, apoptosis, and DNA repair. The NuA4 complex plays a direct role in repair of DNA double-strand breaks (DSBs) by promoting homologous recombination (HR): the complex inhibits TP53BP1 binding to chromatin via MBTD1, which recognizes and binds histone H4 trimethylated at 'Lys-20' (H4K20me), and KAT5 that catalyzes acetylation of 'Lys-15' of histone H2A (H2AK15ac), thereby blocking the ubiquitination mark required for TP53BP1 localization at DNA breaks. Also involved in DSB repair by mediating acetylation of 'Lys-5' of histone H2AX (H2AXK5ac), promoting NBN/NBS1 assembly at the sites of DNA damage. The NuA4 complex plays a key role in hematopoietic stem cell maintenance and is required to maintain acetylated H2A.Z/H2AZ1 at MYC target genes. The NuA4 complex is also required for spermatid development by promoting acetylation of histones: histone hyperacetylation is required for histone replacement during the transition from round to elongating spermatids. Component of a SWR1-like complex that specifically mediates the removal of histone H2A.Z/H2AZ1 from the nucleosome. Also acetylates non-histone proteins, such as BMAL1, ATM, AURKB, CHKA, CGAS, ERCC4/XPF, LPIN1, TP53/p53, NDC80/HEC1, NR1D2, RAN, SOX4, FOXP3, SQSTM1, ULK1 and RUBCNL/Pacer. Directly acetylates and activates ATM. Promotes nucleotide excision repair (NER) by mediating acetylation of ERCC4/XPF, thereby promoting formation of the ERCC4-ERCC1 complex. Relieves NR1D2-mediated inhibition of APOC3 expression by acetylating NR1D2. Acts as a regulator of regulatory T-cells (Treg) by catalyzing FOXP3 acetylation, thereby promoting FOXP3 transcriptional repressor activity. Involved in skeletal myoblast differentiation by mediating acetylation of SOX4. Catalyzes acetylation of APBB1/FE65, increasing its transcription activator activity. Promotes transcription elongation during the activation phase of the circadian cycle by catalyzing acetylation of BMAL1, promoting elongation of circadian transcripts. Together with GSK3 (GSK3A or GSK3B), acts as a regulator of autophagy: phosphorylated at Ser-86 by GSK3 under starvation conditions, leading to activate acetyltransferase activity and promote acetylation of key autophagy regulators, such as ULK1 and RUBCNL/Pacer. Acts as a regulator of the cGAS-STING innate antiviral response by catalyzing acetylation the N-terminus of CGAS, thereby promoting CGAS DNA-binding and activation. Also regulates lipid metabolism by mediating acetylation of CHKA or LPIN1. Promotes lipolysis of lipid droplets following glucose deprivation by mediating acetylation of isoform 1 of CHKA, thereby promoting monomerization of CHKA and its conversion into a tyrosine-protein kinase. Acts as a regulator of fatty-acid-induced triacylglycerol synthesis by catalyzing acetylation of LPIN1, thereby promoting the synthesis of diacylglycerol. In addition to protein acetyltransferase, can use different acyl-CoA substrates, such as (2E)-butenoyl-CoA (crotonyl-CoA), S-lactoyl-CoA (lactyl-CoA) and 2-hydroxyisobutanoyl-CoA (2-hydroxyisobutyryl-CoA), and is able to mediate protein crotonylation, lactylation and 2-hydroxyisobutyrylation, respectively. Acts as a key regulator of chromosome segregation and kinetochore-microtubule attachment during mitosis by mediating acetylation or crotonylation of target proteins. Catalyzes acetylation of AURKB at kinetochores, increasing AURKB activity and promoting accurate chromosome segregation in mitosis. Acetylates RAN during mitosis, promoting microtubule assembly at mitotic chromosomes. Acetylates NDC80/HEC1 during mitosis, promoting robust kinetochore-microtubule attachment. Catalyzes crotonylation of MAPRE1/EB1, thereby ensuring accurate spindle positioning in mitosis. Catalyzes lactylation of NBN/NBS1 in response to DNA damage, thereby promoting DNA double-strand breaks (DSBs) via homologous recombination (HR). This is Histone acetyltransferase KAT5 from Mus musculus (Mouse).